Reading from the N-terminus, the 431-residue chain is GTPase Obg (431 aa).

The Obg domain maps to 1 to 158; sequence MFVDQVKINV…REIRLELKVL (158 aa). The disordered stretch occupies residues 125–145; sequence GNIHFASPKNPAPEIAENGEP. The 177-residue stretch at 159-335 folds into the OBG-type G domain; that stretch reads ADVGLVGFPS…LLQRTADMLA (177 aa). GTP contacts are provided by residues 165-172, 190-194, 212-215, 282-285, and 316-318; these read GFPSVGKS, FTTLV, DLPG, NKMD, and SAL. Residues Ser-172 and Thr-192 each coordinate Mg(2+). An OCT domain is found at 353-431; it reads YNFQPEAEFT…IDDFTFEYMA (79 aa).

Belongs to the TRAFAC class OBG-HflX-like GTPase superfamily. OBG GTPase family. In terms of assembly, monomer. It depends on Mg(2+) as a cofactor.

The protein localises to the cytoplasm. In terms of biological role, an essential GTPase which binds GTP, GDP and possibly (p)ppGpp with moderate affinity, with high nucleotide exchange rates and a fairly low GTP hydrolysis rate. Plays a role in control of the cell cycle, stress response, ribosome biogenesis and in those bacteria that undergo differentiation, in morphogenesis control. This Levilactobacillus brevis (strain ATCC 367 / BCRC 12310 / CIP 105137 / JCM 1170 / LMG 11437 / NCIMB 947 / NCTC 947) (Lactobacillus brevis) protein is GTPase Obg.